We begin with the raw amino-acid sequence, 281 residues long: Pre T-cell antigen receptor alpha (281 aa).

Positions 1–23 are cleaved as a signal peptide; it reads MAGTWLLLLLALGCPALPTGVGG. At 24–146 the chain is on the extracellular side; sequence TPFPSLAPPI…QEPLRGTPGG (123 aa). Cysteines 47 and 107 form a disulfide. A glycan (N-linked (GlcNAc...) asparagine) is linked at Asn67. Residues 147–167 form a helical membrane-spanning segment; sequence ALWLGVLRLLLFKLLLFDLLL. The Cytoplasmic portion of the chain corresponds to 168–281; the sequence is TCSCLCDPAG…LPPPLQAGAA (114 aa). Residues 196 to 233 are disordered; the sequence is LHPATETGGREATSSPRPQPRDRRWGDTPPGRKPGSPV.

In terms of assembly, heterodimer with TCRB; disulfide linked. This heterodimer assembles with CD3 proteins into a signaling-competent pre-T-cell receptor complex. Interacts with RHBDD1. In terms of tissue distribution, expressed in immature but not mature T-cells. Also found in CD34+ cells from peripheral blood, CD34+ precursors from umbilical cord blood and adult bone marrow.

The protein localises to the membrane. Its subcellular location is the cell membrane. Component of the pre-T-cell receptor complex (composed of PTCRA, TCRB and the CD3 complex) that has a crucial role in early T-cell development, particularly alpha-beta T cell differentiation. The polypeptide is Pre T-cell antigen receptor alpha (Homo sapiens (Human)).